The sequence spans 292 residues: 2,3-dihydroxybenzoate decarboxylase (292 aa).

The active site involves Cys263.

This sequence belongs to the metallo-dependent hydrolases superfamily. In terms of assembly, homotetramer.

The catalysed reaction is 2,3-dihydroxybenzoate + H(+) = catechol + CO2. It participates in aromatic compound metabolism; benzoate degradation via hydroxylation. The chain is 2,3-dihydroxybenzoate decarboxylase from Aspergillus niger.